The primary structure comprises 230 residues: MIRSKEPHNNLCLLYNQGLMPYLDAHRWQRSLLNERIHDPSLDDVLILLEHPPVYTLGQGSNSDFIKFDIDQGEYDVHRVERGGEVTYHCPGQLVGYPILNLQRYRKDLHWYLRQLEEVIIRVLTVYGLQGERIPAFTGVWLQGRKVAAIGIKVSRWITMHGFALNVCPDMKGFERIVPCGISDKPVGSLAEWIPGITCQEVRFYVAQCFAEVFGVELIESQPQDFFRPE.

A BPL/LPL catalytic domain is found at 40-218; the sequence is PSLDDVLILL…CFAEVFGVEL (179 aa). Residues 82–89, 149–151, and 162–164 each bind substrate; these read RGGEVTYH, AIG, and GFA. The Acyl-thioester intermediate role is filled by Cys180.

The protein belongs to the LipB family.

The protein resides in the cytoplasm. The catalysed reaction is octanoyl-[ACP] + L-lysyl-[protein] = N(6)-octanoyl-L-lysyl-[protein] + holo-[ACP] + H(+). Its pathway is protein modification; protein lipoylation via endogenous pathway; protein N(6)-(lipoyl)lysine from octanoyl-[acyl-carrier-protein]: step 1/2. Catalyzes the transfer of endogenously produced octanoic acid from octanoyl-acyl-carrier-protein onto the lipoyl domains of lipoate-dependent enzymes. Lipoyl-ACP can also act as a substrate although octanoyl-ACP is likely to be the physiological substrate. This Nostoc punctiforme (strain ATCC 29133 / PCC 73102) protein is Octanoyltransferase.